A 620-amino-acid polypeptide reads, in one-letter code: UDP-glucose:protein N-beta-glucosyltransferase (620 aa).

Belongs to the glycosyltransferase 41 family. Does not require a metal cofactor. is required as a cofactor.

It localises to the cytoplasm. The enzyme catalyses L-asparaginyl-[protein] + UDP-alpha-D-glucose = N(4)-(beta-D-glucosyl)-L-asparaginyl-[protein] + UDP + H(+). The protein operates within protein modification; protein glycosylation. Its function is as follows. Inverting glycosyltransferase that catalyzes the transfer of one glucose moiety from UDP-glucose to an asparagine residue in peptides and proteins containing the NX(S/T) motif, resulting in their modification with a beta-linked 1,N-glucose. Likely acts as a key component of a general protein glycosylation system. Also accepts UDP-galactose as a substrate donor, albeit with low efficiency. Cannot use UDP-GlcNAc or UDP-GalNAc as substrate donor. This is UDP-glucose:protein N-beta-glucosyltransferase from Actinobacillus pleuropneumoniae serotype 7 (strain AP76).